Consider the following 252-residue polypeptide: Imidazole glycerol phosphate synthase subunit HisF (252 aa).

Catalysis depends on residues D11 and D130.

The protein belongs to the HisA/HisF family. In terms of assembly, heterodimer of HisH and HisF.

It is found in the cytoplasm. It catalyses the reaction 5-[(5-phospho-1-deoxy-D-ribulos-1-ylimino)methylamino]-1-(5-phospho-beta-D-ribosyl)imidazole-4-carboxamide + L-glutamine = D-erythro-1-(imidazol-4-yl)glycerol 3-phosphate + 5-amino-1-(5-phospho-beta-D-ribosyl)imidazole-4-carboxamide + L-glutamate + H(+). It functions in the pathway amino-acid biosynthesis; L-histidine biosynthesis; L-histidine from 5-phospho-alpha-D-ribose 1-diphosphate: step 5/9. IGPS catalyzes the conversion of PRFAR and glutamine to IGP, AICAR and glutamate. The HisF subunit catalyzes the cyclization activity that produces IGP and AICAR from PRFAR using the ammonia provided by the HisH subunit. The chain is Imidazole glycerol phosphate synthase subunit HisF from Staphylococcus epidermidis (strain ATCC 35984 / DSM 28319 / BCRC 17069 / CCUG 31568 / BM 3577 / RP62A).